Reading from the N-terminus, the 250-residue chain is AA9 family lytic polysaccharide monooxygenase B (250 aa).

An N-terminal signal peptide occupies residues 1–21; sequence MTLSKITSIAGLLASASLVAG. The Cu(2+) site is built by histidine 22 and histidine 107. Histidine 22 is modified (methylhistidine). Intrachain disulfides connect cysteine 77-cysteine 199 and cysteine 118-cysteine 122. Asparagine 159 carries N-linked (GlcNAc...) asparagine glycosylation. O2-binding residues include histidine 185 and glutamine 194. Tyrosine 196 provides a ligand contact to Cu(2+).

Belongs to the polysaccharide monooxygenase AA9 family. Requires Cu(2+) as cofactor. Post-translationally, the catalytically essential N-terminal histidine His-22 is post-translationally modified by methylation to prevent protonation of the histidine side chain, and protect the critical active site of the enzyme from oxidative damage.

It is found in the secreted. It carries out the reaction [(1-&gt;4)-beta-D-glucosyl]n+m + reduced acceptor + O2 = 4-dehydro-beta-D-glucosyl-[(1-&gt;4)-beta-D-glucosyl]n-1 + [(1-&gt;4)-beta-D-glucosyl]m + acceptor + H2O.. Lytic polysaccharide monooxygenase (LPMO) that depolymerizes crystalline and amorphous polysaccharides via the oxidation of scissile alpha- or beta-(1-4)-glycosidic bonds, yielding C1 and C4 oxidation products. Catalysis by LPMOs requires the reduction of the active-site copper from Cu(II) to Cu(I) by a reducing agent and H(2)O(2) or O(2) as a cosubstrate. Shows activity on phosphoric acid swollen cellulose, on NaOH pretreated soy spent flakes as well as on crystalline cellulose (Avicel). Does not have a positive effect on cel6A activity, but acts synergistically with endoglucanase egl7. This chain is AA9 family lytic polysaccharide monooxygenase B, found in Aspergillus fumigatus (strain ATCC MYA-4609 / CBS 101355 / FGSC A1100 / Af293) (Neosartorya fumigata).